We begin with the raw amino-acid sequence, 464 residues long: uncharacterized protein (464 aa).

Residues 13–71 enclose the TRAM domain; sequence MLKVSDIIQIKIDKIVFGGEGLGYYNGFAVFVPMSIPEDELEIEIISIKKTYARGLIKN. S-adenosyl-L-methionine contacts are provided by Gln295, Tyr324, Glu345, and Asp393. The active-site Nucleophile is the Cys420.

Belongs to the class I-like SAM-binding methyltransferase superfamily. RNA M5U methyltransferase family.

This is an uncharacterized protein from Fusobacterium nucleatum subsp. nucleatum (strain ATCC 25586 / DSM 15643 / BCRC 10681 / CIP 101130 / JCM 8532 / KCTC 2640 / LMG 13131 / VPI 4355).